Here is a 614-residue protein sequence, read N- to C-terminus: Elongation factor 4 (614 aa).

A tr-type G domain is found at 10 to 192 (ALIRNFCIIA…EIVARIPPPV (183 aa)). Residues 22–27 (DHGKST) and 139–142 (NKID) each bind GTP.

Belongs to the TRAFAC class translation factor GTPase superfamily. Classic translation factor GTPase family. LepA subfamily.

The protein resides in the cell membrane. It carries out the reaction GTP + H2O = GDP + phosphate + H(+). Its function is as follows. Required for accurate and efficient protein synthesis under certain stress conditions. May act as a fidelity factor of the translation reaction, by catalyzing a one-codon backward translocation of tRNAs on improperly translocated ribosomes. Back-translocation proceeds from a post-translocation (POST) complex to a pre-translocation (PRE) complex, thus giving elongation factor G a second chance to translocate the tRNAs correctly. Binds to ribosomes in a GTP-dependent manner. The polypeptide is Elongation factor 4 (Thermobifida fusca (strain YX)).